The chain runs to 359 residues: MTKQIQVDLGERSYPIYIGQSLMSDGETLSRYLLKKRILIVTNETVAPLYLKQIQDTMASFGEVTSVILPDGEQFKDLTHLDSIFTALLQRNYGRDSVLVALGGGVIGDMTGFAAACYQRGVDFIQIPTTLLSQVDSSVGGKTAVNHPLGKNMIGAFYQPQIVIIDTECLQTLPAREFAAGMAEVIKYGIMWDAEFFQWLENNVQALKSLDTQALVYAISRCCEIKADVVSQDETEQGVRALLNLGHTFGHAIEAEMGYGNWLHGEAVAAGTVLAAQTAKSMGLIDESIVRRIVQLFHAFDLPVTAPESMDFDSFIKHMRRDKKVLGGQIRLVLPTAIGRADVFSQVPESTLEQVICCA.

NAD(+) is bound by residues 71–76, 105–109, 129–130, Lys142, Lys151, and 169–172; these read DGEQFK, GVIGD, TT, and CLQT. Positions 184, 247, and 264 each coordinate Zn(2+).

Belongs to the sugar phosphate cyclases superfamily. Dehydroquinate synthase family. The cofactor is Co(2+). Zn(2+) serves as cofactor. It depends on NAD(+) as a cofactor.

The protein resides in the cytoplasm. It catalyses the reaction 7-phospho-2-dehydro-3-deoxy-D-arabino-heptonate = 3-dehydroquinate + phosphate. The protein operates within metabolic intermediate biosynthesis; chorismate biosynthesis; chorismate from D-erythrose 4-phosphate and phosphoenolpyruvate: step 2/7. Its function is as follows. Catalyzes the conversion of 3-deoxy-D-arabino-heptulosonate 7-phosphate (DAHP) to dehydroquinate (DHQ). This Shewanella sp. (strain ANA-3) protein is 3-dehydroquinate synthase.